The chain runs to 298 residues: Multifunctional dioxygenase ausE (298 aa).

2 residues coordinate substrate: R72 and Q127. Fe cation-binding residues include H130 and D132. T167 serves as a coordination point for substrate. Residue H214 participates in Fe cation binding. R226 provides a ligand contact to substrate.

The protein belongs to the PhyH family. In terms of assembly, homodimer. The cofactor is Fe cation.

It catalyses the reaction preaustinoid A1 + 2-oxoglutarate + O2 = preaustinoid A2 + succinate + CO2 + H2O. It carries out the reaction preaustinoid A2 + 2-oxoglutarate + O2 = preaustinoid A3 + succinate + CO2 + H2O. The enzyme catalyses berkeleyone A + 2-oxoglutarate + O2 = preaustinoid A + succinate + CO2 + H2O. Its pathway is secondary metabolite biosynthesis; terpenoid biosynthesis. In terms of biological role, multifunctional dioxygenase; part of the gene cluster that mediates the biosynthesis of calidodehydroaustin, a fungal meroterpenoid. The first step of the pathway is the synthesis of 3,5-dimethylorsellinic acid by the polyketide synthase ausA. 3,5-dimethylorsellinic acid is then prenylated by the polyprenyl transferase ausN. Further epoxidation by the FAD-dependent monooxygenase ausM and cyclization by the probable terpene cyclase ausL lead to the formation of protoaustinoid A. Protoaustinoid A is then oxidized to spiro-lactone preaustinoid A3 by the combined action of the FAD-binding monooxygenases ausB and ausC, and the dioxygenase ausE. Acid-catalyzed keto-rearrangement and ring contraction of the tetraketide portion of preaustinoid A3 by ausJ lead to the formation of preaustinoid A4. The aldo-keto reductase ausK, with the help of ausH, is involved in the next step by transforming preaustinoid A4 into isoaustinone which is in turn hydroxylated by the P450 monooxygenase ausI to form austinolide. The cytochrome P450 monooxygenase ausG modifies austinolide to austinol. Austinol is further acetylated to austin by the O-acetyltransferase ausP, which spontaneously changes to dehydroaustin. The cytochrome P450 monooxygenase ausR then converts dehydroaustin is into 7-dehydrodehydroaustin. The hydroxylation catalyzed by ausR permits the O-acetyltransferase ausQ to add an additional acetyl group to the molecule, leading to the formation of acetoxydehydroaustin. The short chain dehydrogenase ausT catalyzes the reduction of the double bond present between carbon atoms 1 and 2 to convert 7-dehydrodehydroaustin into 1,2-dihydro-7-hydroxydehydroaustin. AusQ catalyzes not only an acetylation reaction but also the addition of the PKS ausV diketide product to 1,2-dihydro-7-hydroxydehydroaustin, forming precalidodehydroaustin. Finally, the iron/alpha-ketoglutarate-dependent dioxygenase converts precalidodehydroaustin into calidodehydroaustin. The chain is Multifunctional dioxygenase ausE from Aspergillus calidoustus.